An 825-amino-acid chain; its full sequence is Osmosensitive cation channel TMEM63C (825 aa).

At 1 to 50 (MAFESWPAGGVRPVEELDVRSFLMEENSTAERCYRSHSRSSVLQGLPFGG) the chain is on the extracellular side. A helical transmembrane segment spans residues 51-75 (VPTVLAINVVLWLILLLIFSCLRKA). At 76–141 (AWDYGRLALL…KDEEIRSKCG (66 aa)) the chain is on the cytoplasmic side. Residues 98 to 117 (EQSEKEKTPSDSSPSDSETK) are disordered. Residues 142 to 174 (IDAVTYLSFQRHIILLMMVVCLLSLTIILPVNL) traverse the membrane as a helical segment. Topologically, residues 175 to 198 (SGNLLGDNPENFGRTTVVNVPAQN) are extracellular. Residues 199-223 (IFLWLHSIFALLYFVITVLCMAHHS) traverse the membrane as a helical segment. Residues 224–418 (SRLEYREDEK…IIWENLSVCG (195 aa)) lie on the Cytoplasmic side of the membrane. Residues 419-448 (PRWWLRCILLNILLFLLLFFLTTPAIIVNT) traverse the membrane as a helical segment. The Extracellular portion of the chain corresponds to 449–463 (MDKFNVTRPVESLRN). A helical membrane pass occupies residues 464–493 (PVITQFFPTLLLWAFSILLPFIVYYSSFFE). The Cytoplasmic segment spans residues 494–497 (YHWT). The helical transmembrane segment at 498-534 (RSGENQVTMHKCFLLLVFMVIILPSLGLSSLNLFFRW) threads the bilayer. Over 535 to 557 (LFDVRFLDETDVKFQCVFLPDNG) the chain is Extracellular. The helical transmembrane segment at 558 to 590 (AFFVNYVITSSLIGTAMELLRIPALLVYSLRLC) threads the bilayer. The Cytoplasmic segment spans residues 591–610 (FAKSKAECIHVKISQAYEFQ). A helical membrane pass occupies residues 611–629 (FGLEYAWTMCIFSVSMTYS). At 630 to 632 (ITC) the chain is on the extracellular side. A helical membrane pass occupies residues 633-657 (PVIVPFGLLYLVLKHMVDRYNIYYA). The Cytoplasmic segment spans residues 658-664 (YTPTKLN). A helical transmembrane segment spans residues 665 to 693 (QRIHAAAISQVVVAPILCMFWLLFFSVLR). At 694 to 698 (LGPVQ) the chain is on the extracellular side. Residues 699–719 (PITLFTFITLLCSIAFSCFGF) form a helical membrane-spanning segment. Topologically, residues 720–825 (CMKKLRADRS…LLMDSPVAFQ (106 aa)) are cytoplasmic. A disordered region spans residues 777-825 (SPAHQSYGTMVNSQSSVRDAEEDEEKDLEETLETELKDDLLMDSPVAFQ). A compositionally biased stretch (polar residues) spans 779–793 (AHQSYGTMVNSQSSV). Positions 796–809 (AEEDEEKDLEETLE) are enriched in acidic residues.

Belongs to the CSC1 (TC 1.A.17) family. Monomer.

It localises to the endoplasmic reticulum membrane. The protein resides in the cell membrane. The enzyme catalyses Ca(2+)(in) = Ca(2+)(out). Acts as an osmosensitive cation channel preferentially activated upon hypotonic stress. In contrast to tmem63b, does not show phospholipid scramblase activity. Required for the functional integrity of the kidney glomerular filtration barrier. This chain is Osmosensitive cation channel TMEM63C (tmem63c), found in Danio rerio (Zebrafish).